Here is a 486-residue protein sequence, read N- to C-terminus: MERSSSSSSSSCDKVWNLGLPYPTFTLANDDKPYLITVSDDHSVKVKNVDWISKLPDDVLLIILSRLSTEEAIRTSVVSKRWEHVWNQMSHLVFDMRKNIINSNNTLDGSNPVATLITQVINNHRGHLESCVIIHVPYQGGNGMLNSWIRLLSCVKRTKVLTLRYHYGTWDRKFKTFNFSPDSLSHPSLMSLSLHSYFLESSHPLRNCSNLRTLKLLSIVAPEIGVFNRVLASCPCLEVLVLGICCFKKSRVPLKIENKKLKLLQVSSLERIDAIEVSTTSLDILAIIDICCRRDDLSLQSPQLQFNRNFWVLGPYVPHISYNISEEKSIGNEEFVNTIYGELLRPFANLYVALSVSVDLMNPTEVERLRQVLGLWTRKILELEIIFKDNNGPREENKSWDKKLWEDNNKKDPFPNAKFRVDTVWMYNFSGSEEEFALMTCLIRQGTVVEKMMIKTSTFPARKRLKIEAAVAKLQALQTKLTIKCF.

In terms of domain architecture, F-box spans 49–97; the sequence is VDWISKLPDDVLLIILSRLSTEEAIRTSVVSKRWEHVWNQMSHLVFDMR.

The chain is F-box protein At1g80960 from Arabidopsis thaliana (Mouse-ear cress).